The sequence spans 1004 residues: Protein Wnt-5 (1004 aa).

Residues 1 to 29 (MSCYRKRHFLLWLLRAVCMLHLTARGAYA) form the signal peptide. N60, N66, N115, and N219 each carry an N-linked (GlcNAc...) asparagine glycan. The segment at 238–298 (QKDKAKTSGA…NPGEQPIGGY (61 aa)) is disordered. N-linked (GlcNAc...) asparagine glycans are attached at residues N307 and N341. The disordered stretch occupies residues 310 to 407 (LLKPTDTDSH…ERDEWFRGQS (98 aa)). The segment covering 389 to 403 (RREEQQRQRERDEWF) has biased composition (basic and acidic residues). Residue N422 is glycosylated (N-linked (GlcNAc...) asparagine). The tract at residues 438–472 (KVSSEGSDGELLSRVERSQPSISSSSSSSSSSSRK) is disordered. Low complexity predominate over residues 458–470 (SISSSSSSSSSSS). Residues N484, N485, N528, and N593 are each glycosylated (N-linked (GlcNAc...) asparagine). Cystine bridges form between C583–C594, C633–C641, and C643–C661. N724 carries an N-linked (GlcNAc...) asparagine glycan. Residues 790–822 (FFKGEQQPRKKKRKNQRAAADAPAYPRNGIKES) are disordered. 8 cysteine pairs are disulfide-bonded: C862–C876, C864–C871, C933–C964, C949–C959, C963–C1003, C979–C994, C981–C991, and C986–C987. S868 is lipidated: O-palmitoleoyl serine; by PORCN. The N-linked (GlcNAc...) asparagine glycan is linked to N952.

Belongs to the Wnt family. As to quaternary structure, interacts with porcupine (por). In terms of processing, glycosylated, glycosylation is stimulated by porcupine at the ER. Post-translationally, palmitoleoylated by porcupine. The lipid group functions as a sorting signal, targeting the ligand to polarized vesicles that transport Wnt5 to unique sites at the cell surface. Depalmitoleoylated by notum, leading to inhibit Wnt signaling pathway. Dynamic expression pattern during embryogenesis. Expression is seen in the limb primordia of the head and thoracic segments, mesodermal and neurogenic regions.

It localises to the secreted. The protein localises to the extracellular space. Its subcellular location is the extracellular matrix. Binds as a ligand to a family of frizzled seven-transmembrane receptors and acts through a cascade of genes on the nucleus. Probable developmental protein. May be a signaling molecule which affects the development of discrete regions of tissues. Is likely to signal over only few cell diameters. May have a role in limb and CNS development; may be a downstream target of Dll that acts in the specification of these primordia. The polypeptide is Protein Wnt-5 (Wnt5) (Drosophila melanogaster (Fruit fly)).